A 418-amino-acid chain; its full sequence is Tol-Pal system protein TolB (418 aa).

The signal sequence occupies residues 1–21 (MKLFVQLVLFISLFIPYSTKA).

This sequence belongs to the TolB family. As to quaternary structure, the Tol-Pal system is composed of five core proteins: the inner membrane proteins TolA, TolQ and TolR, the periplasmic protein TolB and the outer membrane protein Pal. They form a network linking the inner and outer membranes and the peptidoglycan layer.

It localises to the periplasm. Part of the Tol-Pal system, which plays a role in outer membrane invagination during cell division and is important for maintaining outer membrane integrity. This chain is Tol-Pal system protein TolB, found in Wolbachia pipientis subsp. Culex pipiens (strain wPip).